The following is a 488-amino-acid chain: Ammonium transporter 1 member 1 (488 aa).

11 helical membrane passes run 47 to 69 (TYLL…LLAG), 90 to 109 (LFYY…NGFI), 129 to 148 (FLYQ…GSIA), 153 to 175 (FVAY…SHWF), 195 to 217 (VIDF…YGAL), 238 to 257 (HSAS…WYGF), 281 to 303 (AVGR…TLFG), 316 to 333 (VCNG…GCSV), 337 to 356 (WAAI…FNML), 368 to 387 (AAQL…GLFA), and 418 to 440 (HIIQ…FYIL).

The protein belongs to the ammonia transporter channel (TC 1.A.11.2) family. Root hairs and leaves.

Its subcellular location is the membrane. In terms of biological role, ammonium transporter that may be involved in ammonium uptake from the soil. The protein is Ammonium transporter 1 member 1 (AMT1-1) of Solanum lycopersicum (Tomato).